Here is a 470-residue protein sequence, read N- to C-terminus: Arginine ADP-riboxanase OspC1 (470 aa).

Residues His-138, Gln-139, Ser-140, Leu-144, Ile-157, Asn-167, Phe-183, His-201, Phe-206, Asp-226, and Glu-320 each coordinate NAD(+). Residue Glu-320 is part of the active site. ANK repeat units lie at residues 363-392 (IALQALFLSITNQKEDVALYILSNFEITRQ), 399-431 (HELYDIEYLLSAHNSSCKVLEYFINKGLVDVNT), and 438-467 (SGDCMLDNAIKYENAEMIKLLLKYGATSDN).

The protein belongs to the OspC family. In terms of assembly, interacts with host calmodulin (CALM1, CALM2 and/or CALM3); specifically interacts with the apo form of calmodulin, preventing calcium-binding.

It is found in the secreted. The protein localises to the host nucleus. The enzyme catalyses L-arginyl-[protein] + NAD(+) = ADP-riboxanated L-argininyl-[protein] + nicotinamide + NH4(+) + H(+). ADP-riboxanase effector that mediates arginine ADP-riboxanation of host caspases. ADP-riboxanation of host apoptotic caspases (CASP3, CASP8 and CASP9) prevents their activation, thereby inhibiting host cell extrinsic and intrinsic apoptosis. Does not catalyze ADP-riboxanation of host CASP4/CASP11. Independently of its ADP-riboxanase activity, acts as an inhibitor of calcium signaling by inhibiting host calmodulin, preventing activation of the JAK-STAT signaling pathway in response to interferon-beta. Mechanistically, acts by binding to the apo form of calmodulin, preventing calcium-binding and ability to activate host CaMK2 (CAMKII), which is required to stimulate the JAK-STAT signaling pathway in response to interferon-beta. The polypeptide is Arginine ADP-riboxanase OspC1 (Shigella flexneri).